A 282-amino-acid polypeptide reads, in one-letter code: Dihydropteroate synthase (282 aa).

Positions 15–267 (PHVMGILNVT…DVKETVEAMR (253 aa)) constitute a Pterin-binding domain. Residue Asn22 coordinates Mg(2+). Residues Thr62, Asp96, Asn115, Asp185, Lys221, and 255 to 257 (RVH) each bind (7,8-dihydropterin-6-yl)methyl diphosphate.

It belongs to the DHPS family. Homodimer. It depends on Mg(2+) as a cofactor.

The catalysed reaction is (7,8-dihydropterin-6-yl)methyl diphosphate + 4-aminobenzoate = 7,8-dihydropteroate + diphosphate. Its pathway is cofactor biosynthesis; tetrahydrofolate biosynthesis; 7,8-dihydrofolate from 2-amino-4-hydroxy-6-hydroxymethyl-7,8-dihydropteridine diphosphate and 4-aminobenzoate: step 1/2. Catalyzes the condensation of para-aminobenzoate (pABA) with 6-hydroxymethyl-7,8-dihydropterin diphosphate (DHPt-PP) to form 7,8-dihydropteroate (H2Pte), the immediate precursor of folate derivatives. This Shigella flexneri protein is Dihydropteroate synthase (folP).